The sequence spans 227 residues: 2-C-methyl-D-erythritol 4-phosphate cytidylyltransferase (227 aa).

It belongs to the IspD/TarI cytidylyltransferase family. IspD subfamily.

It carries out the reaction 2-C-methyl-D-erythritol 4-phosphate + CTP + H(+) = 4-CDP-2-C-methyl-D-erythritol + diphosphate. It participates in isoprenoid biosynthesis; isopentenyl diphosphate biosynthesis via DXP pathway; isopentenyl diphosphate from 1-deoxy-D-xylulose 5-phosphate: step 2/6. Functionally, catalyzes the formation of 4-diphosphocytidyl-2-C-methyl-D-erythritol from CTP and 2-C-methyl-D-erythritol 4-phosphate (MEP). The sequence is that of 2-C-methyl-D-erythritol 4-phosphate cytidylyltransferase from Nostoc punctiforme (strain ATCC 29133 / PCC 73102).